Consider the following 302-residue polypeptide: Protoheme IX farnesyltransferase 2 (302 aa).

9 helical membrane-spanning segments follow: residues I14–V34, W36–I56, A85–T105, L108–M128, V133–A153, A163–F183, I209–A229, G230–S250, and Q264–G284.

The protein belongs to the UbiA prenyltransferase family. Protoheme IX farnesyltransferase subfamily.

The protein resides in the cell inner membrane. The enzyme catalyses heme b + (2E,6E)-farnesyl diphosphate + H2O = Fe(II)-heme o + diphosphate. Its pathway is porphyrin-containing compound metabolism; heme O biosynthesis; heme O from protoheme: step 1/1. In terms of biological role, converts heme B (protoheme IX) to heme O by substitution of the vinyl group on carbon 2 of heme B porphyrin ring with a hydroxyethyl farnesyl side group. The polypeptide is Protoheme IX farnesyltransferase 2 (Chromobacterium violaceum (strain ATCC 12472 / DSM 30191 / JCM 1249 / CCUG 213 / NBRC 12614 / NCIMB 9131 / NCTC 9757 / MK)).